Consider the following 788-residue polypeptide: Endonuclease MutS2 (788 aa).

Residue 332–339 (GPNTGGKT) participates in ATP binding. A Smr domain is found at 713-788 (VDLRGMDAEE…GTGVTVVEIK (76 aa)).

Belongs to the DNA mismatch repair MutS family. MutS2 subfamily. In terms of assembly, homodimer. Binds to stalled ribosomes, contacting rRNA.

Functionally, endonuclease that is involved in the suppression of homologous recombination and thus may have a key role in the control of bacterial genetic diversity. In terms of biological role, acts as a ribosome collision sensor, splitting the ribosome into its 2 subunits. Detects stalled/collided 70S ribosomes which it binds and splits by an ATP-hydrolysis driven conformational change. Acts upstream of the ribosome quality control system (RQC), a ribosome-associated complex that mediates the extraction of incompletely synthesized nascent chains from stalled ribosomes and their subsequent degradation. Probably generates substrates for RQC. The sequence is that of Endonuclease MutS2 from Clostridium botulinum (strain 657 / Type Ba4).